The sequence spans 150 residues: UPF0756 membrane protein Dd703_1075 (150 aa).

Transmembrane regions (helical) follow at residues 8-28 (LLIL…TITL), 51-71 (YGLS…IASG), 81-101 (AFLN…SWLG), and 114-134 (VVAG…GVPV).

Belongs to the UPF0756 family.

It localises to the cell membrane. In Musicola paradisiaca (strain Ech703) (Dickeya paradisiaca), this protein is UPF0756 membrane protein Dd703_1075.